A 480-amino-acid chain; its full sequence is Siroheme synthase 2 (480 aa).

The segment at M1–L202 is precorrin-2 dehydrogenase /sirohydrochlorin ferrochelatase. Residues E22–V23 and P43–E44 contribute to the NAD(+) site. S126 is modified (phosphoserine). The tract at residues G214–A480 is uroporphyrinogen-III C-methyltransferase. P223 lines the S-adenosyl-L-methionine pocket. D246 acts as the Proton acceptor in catalysis. K268 (proton donor) is an active-site residue. Residues G299–D301, T329–A330, M381, and G410 each bind S-adenosyl-L-methionine.

The protein in the N-terminal section; belongs to the precorrin-2 dehydrogenase / sirohydrochlorin ferrochelatase family. This sequence in the C-terminal section; belongs to the precorrin methyltransferase family.

The catalysed reaction is uroporphyrinogen III + 2 S-adenosyl-L-methionine = precorrin-2 + 2 S-adenosyl-L-homocysteine + H(+). The enzyme catalyses precorrin-2 + NAD(+) = sirohydrochlorin + NADH + 2 H(+). It catalyses the reaction siroheme + 2 H(+) = sirohydrochlorin + Fe(2+). Its pathway is cofactor biosynthesis; adenosylcobalamin biosynthesis; precorrin-2 from uroporphyrinogen III: step 1/1. It participates in cofactor biosynthesis; adenosylcobalamin biosynthesis; sirohydrochlorin from precorrin-2: step 1/1. It functions in the pathway porphyrin-containing compound metabolism; siroheme biosynthesis; precorrin-2 from uroporphyrinogen III: step 1/1. The protein operates within porphyrin-containing compound metabolism; siroheme biosynthesis; siroheme from sirohydrochlorin: step 1/1. Its pathway is porphyrin-containing compound metabolism; siroheme biosynthesis; sirohydrochlorin from precorrin-2: step 1/1. Multifunctional enzyme that catalyzes the SAM-dependent methylations of uroporphyrinogen III at position C-2 and C-7 to form precorrin-2 via precorrin-1. Then it catalyzes the NAD-dependent ring dehydrogenation of precorrin-2 to yield sirohydrochlorin. Finally, it catalyzes the ferrochelation of sirohydrochlorin to yield siroheme. This is Siroheme synthase 2 from Aeromonas salmonicida (strain A449).